Consider the following 4043-residue polypeptide: Polyketide synthase-nonribosomal peptide synthetase (4043 aa).

The region spanning Ser8–Ser446 is the Ketosynthase family 3 (KS3) domain. Catalysis depends on for beta-ketoacyl synthase activity residues Cys181, His320, and His366. The segment at Val557–Phe877 is acyl transferase. Positions Asn944–Ser1078 are N-terminal hotdog fold. The PKS/mFAS DH domain maps to Asn944–Ala1246. The dehydratase (DH) domain stretch occupies residues Glu945–Pro1243. His976 serves as the catalytic Proton acceptor; for dehydratase activity. The segment at Leu1093–Ala1246 is C-terminal hotdog fold. The active-site Proton donor; for dehydratase activity is Asp1154. A methyltransferase (MT) domain region spans residues Arg1400 to Asp1585. The ketoreductase (KR)domain stretch occupies residues Thr2115–Ile2288. A Carrier 1 domain is found at Ser2394 to Leu2475. The interval Ser2395–Gln2472 is peptidyl carrier protein. Ser2435 is subject to O-(pantetheine 4'-phosphoryl)serine. Disordered regions lie at residues Pro2476–Arg2575 and Glu2587–Ile2630. Polar residues-rich tracts occupy residues Pro2494–Asn2512 and Ala2520–Lys2534. The span at Pro2537–Val2550 shows a compositional bias: basic and acidic residues. The segment covering Thr2617–Ser2627 has biased composition (low complexity). The condensation stretch occupies residues Lys2640–Pro3069. Positions Glu3102–Ile3502 are adenylation. One can recognise a Carrier 2 domain in the interval Thr3617–Glu3697. The segment at Ser3622 to Asp3694 is thiolation. Ser3657 carries the post-translational modification O-(pantetheine 4'-phosphoryl)serine. The reductase-like stretch occupies residues Leu3735–Met3954.

In the C-terminal section; belongs to the NRP synthetase family.

The protein operates within mycotoxin biosynthesis. In terms of biological role, hybrid PKS-NRPS synthetase; part of the gene cluster that mediates the biosynthesis of the mycotoxins cytochalasins E and K. The hybrid PKS-NRPS synthetase ccsA and the enoyl reductase ccsC are responsible for fusion of phenylalanine with an octaketide backbone and subsequent release of the stable tetramic acid precursor. The polyketide synthase module (PKS) of the PKS-NRPS ccsA is responsible for the synthesis of the octaketide backbone. The downstream nonribosomal peptide synthetase (NRPS) amidates the carboxyl end of the octaketide with a phenylalanine. A reductase-like domain (R) at the C-terminus catalyzes the reductive release of the polyketide-amino acid intermediate. Because ccsA lacks a designated enoylreductase (ER) domain, the required activity is provided the enoyl reductase ccsC. Upon formation of the 11-membered carbocycle-fused perhydroisoindolone intermediate, a number of oxidative steps are required to afford the final cytochalasin E and K, including two hydroxylations at C17 and C18, one alcohol oxidation at C17, one epoxidation at C6 and C7 and two Baeyer-Villiger oxidations. The oxidative modification at C17, C18 and the C6-C7 epoxidation are likely to be catalyzed by the two cytochrome P450 oxygenases ccsD and ccsG. CcsD may be responsible for the epoxidation of the C6-C7 double bond. CcsG may be responsible for the successive oxidative modifications at C17 and C18. The double Baeyer-Villiger oxidations of ketocytochalasin to precytochalasin and cytochalasin Z(16) are among the final steps leading to cytochalasin E and K and are catalyzed by ccsB. The first oxygen insertion step follows that of the classic BVMO mechanism, generating the ester precytochalasin. Release of precytochalasin into an aqueous environment can generate the shunt product iso-precytochalasin through spontaneous isomerization. Alternatively, precytochalasin can undergo further oxidation by ccsB to yield the in-line carbonate-containing cytochalasin Z(16). Cytochalasin Z(16) is a precursor to cytochalasin E and cytochalasin K, whereas iso-precytochalasin is a precursor to cytochalasin Z(17) and rosellichalasin. The hydrolyase ccsE may catalyze hydrolysis of epoxide bond in cytochalasin E to afford cytochalasin K. The function of ccsF has not been assigned but it may play a role in post-PKS-NRPS biosynthetic step, resistance or transport of cytochalasins and related PKS-NRPS products. In Aspergillus clavatus (strain ATCC 1007 / CBS 513.65 / DSM 816 / NCTC 3887 / NRRL 1 / QM 1276 / 107), this protein is Polyketide synthase-nonribosomal peptide synthetase.